Reading from the N-terminus, the 391-residue chain is mRNA-capping enzyme subunit alpha (391 aa).

The active-site N6-GMP-lysine intermediate is K63. The tract at residues 363-391 (KERNRRPRDEDRKRVGGDDHDHGAKRARQ) is disordered.

The protein belongs to the eukaryotic GTase family. In terms of assembly, heterodimer. The mRNA-capping enzyme is composed of two separate chains alpha and beta, respectively a mRNA guanylyltransferase and an mRNA 5'-triphosphate monophosphatase.

Its subcellular location is the nucleus. It carries out the reaction a 5'-end diphospho-ribonucleoside in mRNA + GTP + H(+) = a 5'-end (5'-triphosphoguanosine)-ribonucleoside in mRNA + diphosphate. Functionally, second step of mRNA capping. Transfer of the GMP moiety of GTP to the 5'-end of RNA via an enzyme-GMP covalent reaction intermediate. This Yarrowia lipolytica (strain CLIB 122 / E 150) (Yeast) protein is mRNA-capping enzyme subunit alpha (CEG1).